Reading from the N-terminus, the 1106-residue chain is Protein transport protein Sec31A (1106 aa).

WD repeat units lie at residues 4–47, 68–111, 120–160, 166–206, 209–254, 258–298, and 301–342; these read KEVD…EIFE, RYHK…AGDK, KHTG…TPMT, QPPE…PIIK, DHSN…SPLR, NHAR…VLYE, and TNTQ…DGLR. An interaction with SEC13 region spans residues 161-471; that stretch reads PGAKTQPPED…IDASQTEFEK (311 aa). The stretch at 397-430 is one WD 8; interaction with SEC13 repeat; it reads SFSFGGKLVTFENVRMPSHQGAEQQQQQHHVFIS. Residues Ser-527 and Ser-532 each carry the phosphoserine modification. Residue Lys-647 forms a Glycyl lysine isopeptide (Lys-Gly) (interchain with G-Cter in ubiquitin) linkage. Phosphoserine is present on Ser-799. The segment at 800 to 999 is interaction with PDCD6; sequence PKIPYEEQQL…TKKITKKPIP (200 aa). The ALG-2-binding site motif-2 (ABS-2) signature appears at 842–848; sequence GFIMHGN. Residues 859-980 are disordered; that stretch reads TSPGHMHTQV…EGAPGAPIGN (122 aa). Polar residues predominate over residues 917-939; sequence PQSQMLQQQPSAPVPLSSQSSFP. Residue Thr-1047 is modified to Phosphothreonine. A Phosphoserine modification is found at Ser-1049. Lys-1103 participates in a covalent cross-link: Glycyl lysine isopeptide (Lys-Gly) (interchain with G-Cter in ubiquitin).

This sequence belongs to the WD repeat SEC31 family. COPII is composed of at least 5 proteins: the SEC23/24 complex, the SEC13/31 complex and SAR1. SEC13 and SEC31 make a 2:2 tetramer that forms the edge element of the COPII outer coat. The tetramer self-assembles in multiple copies to form the complete polyhedral cage. Interacts (via WD 8) with SEC13. Interacts with PDCD6; interaction takes place in response to cytosolic calcium increase and leads to bridge together the BCR(KLHL12) complex and SEC31A, leading to monoubiquitination. Interacts with KLHL12. Post-translationally, monoubiquitinated by the BCR(KLHL12) E3 ubiquitin ligase complex, leading to regulate the size of COPII coats.

It localises to the cytoplasm. The protein localises to the cytoplasmic vesicle. Its subcellular location is the COPII-coated vesicle membrane. It is found in the endoplasmic reticulum membrane. Functionally, component of the coat protein complex II (COPII) which promotes the formation of transport vesicles from the endoplasmic reticulum (ER). The coat has two main functions, the physical deformation of the endoplasmic reticulum membrane into vesicles and the selection of cargo molecules. This Pongo abelii (Sumatran orangutan) protein is Protein transport protein Sec31A (SEC31A).